A 796-amino-acid chain; its full sequence is Polyribonucleotide nucleotidyltransferase (796 aa).

Mg(2+)-binding residues include D490 and D496. Positions 557–616 (PRIESIFINKDKIRNVIGSGGKNIRDICEKTGAKIEIIQDGTVMIYAVNNEAVEYAKSMI) constitute a KH domain. In terms of domain architecture, S1 motif spans 626-693 (GKVFEGTVVE…DREHIQLSMR (68 aa)). Composition is skewed to low complexity over residues 717–728 (DDSCGSTGGSSF), 747–759 (GGSS…NSNG), and 769–784 (SSNG…SNSR). A disordered region spans residues 717–796 (DDSCGSTGGS…HDVPRKPRFF (80 aa)). The span at 785–796 (NGHDVPRKPRFF) shows a compositional bias: basic and acidic residues.

Belongs to the polyribonucleotide nucleotidyltransferase family. The cofactor is Mg(2+).

The protein localises to the cytoplasm. The enzyme catalyses RNA(n+1) + phosphate = RNA(n) + a ribonucleoside 5'-diphosphate. Involved in mRNA degradation. Catalyzes the phosphorolysis of single-stranded polyribonucleotides processively in the 3'- to 5'-direction. The protein is Polyribonucleotide nucleotidyltransferase of Ehrlichia chaffeensis (strain ATCC CRL-10679 / Arkansas).